A 458-amino-acid polypeptide reads, in one-letter code: Sushi repeat-containing protein SRPX2 (458 aa).

The N-terminal stretch at 1 to 18 (MEASITVLLFAFTKVASS) is a signal peptide. 3 consecutive Sushi domains span residues 62 to 112 (ATCY…HCRR), 113 to 171 (IQCH…VCVD), and 255 to 314 (RRCP…TCTP). Intrachain disulfides connect C64–C98, C84–C110, C115–C156, and C142–C169. The 85-residue stretch at 170-254 (VDLDPPKIQC…SCKFIVKVQV (85 aa)) folds into the HYR domain. Disulfide bonds link C257-C299 and C285-C312.

Forms homooligomers.

It is found in the secreted. Its subcellular location is the cytoplasm. The protein localises to the cell surface. It localises to the synapse. In terms of biological role, may play a role in angiogenesis, synapse formation, cellular migration and adhesion. In Xenopus laevis (African clawed frog), this protein is Sushi repeat-containing protein SRPX2 (srpx2).